A 438-amino-acid polypeptide reads, in one-letter code: Probable glycine dehydrogenase (decarboxylating) subunit 1 (438 aa).

The protein belongs to the GcvP family. N-terminal subunit subfamily. As to quaternary structure, the glycine cleavage system is composed of four proteins: P, T, L and H. In this organism, the P 'protein' is a heterodimer of two subunits.

The catalysed reaction is N(6)-[(R)-lipoyl]-L-lysyl-[glycine-cleavage complex H protein] + glycine + H(+) = N(6)-[(R)-S(8)-aminomethyldihydrolipoyl]-L-lysyl-[glycine-cleavage complex H protein] + CO2. In terms of biological role, the glycine cleavage system catalyzes the degradation of glycine. The P protein binds the alpha-amino group of glycine through its pyridoxal phosphate cofactor; CO(2) is released and the remaining methylamine moiety is then transferred to the lipoamide cofactor of the H protein. The polypeptide is Probable glycine dehydrogenase (decarboxylating) subunit 1 (Syntrophomonas wolfei subsp. wolfei (strain DSM 2245B / Goettingen)).